A 360-amino-acid polypeptide reads, in one-letter code: Magnesium transporter NIPA2 (360 aa).

The Extracellular portion of the chain corresponds to 1–9 (MSQGHGKYD). The helical transmembrane segment at 10-30 (FYIGLGLAMSSSIFIGGSFIL) threads the bilayer. The Cytoplasmic segment spans residues 31-56 (KKKGLLRLARKGSTRAGQGGHAYLKE). Residues 57-77 (WLWWAGLLSMGAGEVANFAAY) traverse the membrane as a helical segment. Position 78 (Ala78) is a topological domain, extracellular. The helical transmembrane segment at 79 to 99 (FAPATLVTPLGALSVLVSAIL) threads the bilayer. Topologically, residues 100-107 (SSYFLNER) are cytoplasmic. Residues 108 to 128 (LNLHGKIGCLLSILGSTVMVI) form a helical membrane-spanning segment. Topologically, residues 129 to 149 (HAPKEEEIETLNEMSHKLGDP) are extracellular. Residues 150 to 170 (GFVVFATLVVIVSLILIFVVG) traverse the membrane as a helical segment. At 171–175 (PRHGQ) the chain is on the cytoplasmic side. The chain crosses the membrane as a helical span at residues 176–196 (TNILVYITICSVIGAVSVSCA). Residues 197-215 (KGLGIAIKELFAGKPVLQH) lie on the Extracellular side of the membrane. A helical transmembrane segment spans residues 216 to 236 (PLTWILLLSLIVCVSTQINYL). The Cytoplasmic segment spans residues 237-246 (NRALDIFNTS). The chain crosses the membrane as a helical span at residues 247-267 (IVTPIYYVFFTTSVITCSAIL). Over 268–278 (FKEWQDMPVDD) the chain is Extracellular. Residues 279–299 (VIGTLSGFFTIIVGIFLLHAF) form a helical membrane-spanning segment. Topologically, residues 300–360 (KDVSFSLSSL…SRRNGNLTAF (61 aa)) are cytoplasmic.

This sequence belongs to the NIPA family.

It localises to the cell membrane. The protein resides in the early endosome. It catalyses the reaction Mg(2+)(in) = Mg(2+)(out). In terms of biological role, acts as a selective Mg(2+) transporter. The polypeptide is Magnesium transporter NIPA2 (NIPA2) (Bos taurus (Bovine)).